The primary structure comprises 212 residues: Large ribosomal subunit protein uL3 (212 aa).

Residues 136 to 155 (THGNSVSHRVLGSTGQNQTP) are disordered. Position 153 is an N5-methylglutamine (glutamine 153).

Belongs to the universal ribosomal protein uL3 family. As to quaternary structure, part of the 50S ribosomal subunit. Forms a cluster with proteins L14 and L19. In terms of processing, methylated by PrmB.

Its function is as follows. One of the primary rRNA binding proteins, it binds directly near the 3'-end of the 23S rRNA, where it nucleates assembly of the 50S subunit. This Acinetobacter baumannii (strain AB307-0294) protein is Large ribosomal subunit protein uL3.